Reading from the N-terminus, the 321-residue chain is MIIFTLRRILLLIVTLFLLTFVGFSLSYFTPHAPLQGASLWNAWVFWFNGLIHWDFGVSSINGQPIAEQLKEVFPATMELCILAFGFALIVGIPVGMIAGITRHKWQDNLINAIALLGFSIPVFWLALLLTLFCSLTLGWLPVSGRFDLLYEVKPITGFALIDAWLSDSPWRDEMIMSAIRHMILPVITLSVAPTTEVIRLMRISTIEVYDQNYVKAAATRGLSRFTILRRHVLHNALPPVIPRLGLQFSTMLTLAMITEMVFSWPGLGRWLINAIRQQDYAAISAGVMVCGSLVIIVNVISDILGAMANPLKHKEWYALR.

The Cytoplasmic segment spans residues 1–8 (MIIFTLRR). The helical transmembrane segment at 9 to 29 (ILLLIVTLFLLTFVGFSLSYF) threads the bilayer. The Periplasmic portion of the chain corresponds to 30–80 (TPHAPLQGASLWNAWVFWFNGLIHWDFGVSSINGQPIAEQLKEVFPATMEL). The ABC transmembrane type-1 domain occupies 74-302 (FPATMELCIL…SLVIIVNVIS (229 aa)). Residues 81 to 101 (CILAFGFALIVGIPVGMIAGI) traverse the membrane as a helical segment. At 102 to 112 (TRHKWQDNLIN) the chain is on the cytoplasmic side. Residues 113 to 133 (AIALLGFSIPVFWLALLLTLF) traverse the membrane as a helical segment. Over 134-174 (CSLTLGWLPVSGRFDLLYEVKPITGFALIDAWLSDSPWRDE) the chain is Periplasmic. A helical transmembrane segment spans residues 175 to 195 (MIMSAIRHMILPVITLSVAPT). Topologically, residues 196–248 (TEVIRLMRISTIEVYDQNYVKAAATRGLSRFTILRRHVLHNALPPVIPRLGLQ) are cytoplasmic. Residues 249–269 (FSTMLTLAMITEMVFSWPGLG) form a helical membrane-spanning segment. The Periplasmic portion of the chain corresponds to 270 to 280 (RWLINAIRQQD). The chain crosses the membrane as a helical span at residues 281–301 (YAAISAGVMVCGSLVIIVNVI). The Cytoplasmic portion of the chain corresponds to 302–321 (SDILGAMANPLKHKEWYALR).

It belongs to the binding-protein-dependent transport system permease family. OppBC subfamily.

It is found in the cell inner membrane. Part of a putrescine export transport system, does not play a role in resistance to antimicrobial peptides. The polypeptide is Putrescine export system permease protein SapB (sapB) (Escherichia coli (strain K12)).